We begin with the raw amino-acid sequence, 66 residues long: Ribosome biogenesis protein Nop10 (66 aa).

The protein belongs to the NOP10 family.

In terms of biological role, involved in ribosome biogenesis; more specifically in 18S rRNA pseudouridylation and in cleavage of pre-rRNA. This Desulfurococcus amylolyticus (strain DSM 18924 / JCM 16383 / VKM B-2413 / 1221n) (Desulfurococcus kamchatkensis) protein is Ribosome biogenesis protein Nop10.